The sequence spans 227 residues: ATP-dependent dethiobiotin synthetase BioD (227 aa).

13 to 18 (DIGKTY) contacts ATP. Thr-17 lines the Mg(2+) pocket. Residue Lys-38 is part of the active site. Residue Ser-42 participates in substrate binding. Residues Asp-55, 116–119 (EGSG), and 179–180 (NN) contribute to the ATP site. Mg(2+)-binding residues include Asp-55 and Glu-116.

The protein belongs to the dethiobiotin synthetase family. In terms of assembly, homodimer. The cofactor is Mg(2+).

The protein resides in the cytoplasm. The enzyme catalyses (7R,8S)-7,8-diammoniononanoate + CO2 + ATP = (4R,5S)-dethiobiotin + ADP + phosphate + 3 H(+). Its pathway is cofactor biosynthesis; biotin biosynthesis; biotin from 7,8-diaminononanoate: step 1/2. Functionally, catalyzes a mechanistically unusual reaction, the ATP-dependent insertion of CO2 between the N7 and N8 nitrogen atoms of 7,8-diaminopelargonic acid (DAPA, also called 7,8-diammoniononanoate) to form a ureido ring. The chain is ATP-dependent dethiobiotin synthetase BioD from Clostridium botulinum (strain Okra / Type B1).